The sequence spans 275 residues: LIM/homeobox protein Awh (275 aa).

2 consecutive LIM zinc-binding domains span residues R6 to A67 and K68 to G129. T126 carries the post-translational modification Phosphothreonine. Positions T148–I207 form a DNA-binding region, homeobox. Positions P253–V275 are disordered.

First detected in neuroblasts in stage 9 embryos. Expressed in all 10 abdominal segments and in the labial segment during early embryogenesis. Expressed in the stage 14 developing epithelium. By embryonic stage 16, expression is refined to the abdominal histoblasts and salivary gland imaginal ring cells. Expressed in both larval and imaginal cells between the salivary gland and the salivary gland imaginal ring, in late third instar larvae. Also expressed in specific areas of the larval wing, leg and eye-antennal disks.

The protein resides in the nucleus. Its function is as follows. Probable transcription factor. Required for the establishment of a subset of imaginal tissues: the abdominal histoblasts and the salivary gland imaginal rings. The protein is LIM/homeobox protein Awh of Drosophila melanogaster (Fruit fly).